The primary structure comprises 270 residues: MPKSKRARVYHLTQVNKKGREAKERLFSNIRETIPKYQHCFVFSVDNMRNNYLKDVRHELNDCRIFFGKTKLMARALGTTPEEEQADGLHRLTRYLTGTVGLLFTNRDPADIESYFSNLSQVDFARAGTVAPRTVTVPPGIVYSTGGEVPPEHDVPVSHTLEPELRRLGMPVRMIKGKVCLGDEKGEASEGYTICKEGEVLDSRQTRLLKLFSICLSEFKVSLLGYWSSASGEVTELEAGKTRPKREGNRRQAMNGDEMDEDQSSDEDSD.

The segment at 234-270 is disordered; sequence VTELEAGKTRPKREGNRRQAMNGDEMDEDQSSDEDSD. A compositionally biased stretch (basic and acidic residues) spans 238 to 250; sequence EAGKTRPKREGNR. Acidic residues predominate over residues 257–270; it reads DEMDEDQSSDEDSD.

It belongs to the universal ribosomal protein uL10 family. As to quaternary structure, associates with the pre-60S ribosomal particle.

It localises to the nucleus. The protein resides in the nucleolus. Its subcellular location is the cytoplasm. Component of the ribosome assembly machinery. Nuclear paralog of the ribosomal protein P0, it binds pre-60S subunits at an early stage of assembly in the nucleolus, and is replaced by P0 in cytoplasmic pre-60S subunits and mature 80S ribosomes. The protein is Large ribosomal subunit protein uL10 of Chaetomium thermophilum (strain DSM 1495 / CBS 144.50 / IMI 039719) (Thermochaetoides thermophila).